A 151-amino-acid polypeptide reads, in one-letter code: Transcription antitermination protein NusB (151 aa).

This sequence belongs to the NusB family.

In terms of biological role, involved in transcription antitermination. Required for transcription of ribosomal RNA (rRNA) genes. Binds specifically to the boxA antiterminator sequence of the ribosomal RNA (rrn) operons. The protein is Transcription antitermination protein NusB of Thermus thermophilus (strain ATCC BAA-163 / DSM 7039 / HB27).